The following is a 360-amino-acid chain: Photosystem II protein D1 2 (360 aa).

The next 3 membrane-spanning stretches (helical) occupy residues 29-46 (YIGW…TAVT), 118-133 (HYMI…QWEY), and 142-156 (WICV…ATYS). His-118 contributes to the chlorophyll a binding site. Residue Tyr-126 coordinates pheophytin a. Positions 170 and 189 each coordinate [CaMn4O5] cluster. The chain crosses the membrane as a helical span at residues 197–218 (FHMFGVAGVLGGSLFAAMHGSL). His-198 contacts chlorophyll a. A quinone-binding positions include His-215 and 264 to 265 (SF). His-215 is a binding site for Fe cation. His-272 lines the Fe cation pocket. A helical transmembrane segment spans residues 274 to 288 (FLGAWPVVCIWLTAM). [CaMn4O5] cluster is bound by residues His-332, Glu-333, Asp-342, and Ala-344. The propeptide occupies 345-360 (AGESAPVALTAPVING).

The protein belongs to the reaction center PufL/M/PsbA/D family. PSII is composed of 1 copy each of membrane proteins PsbA, PsbB, PsbC, PsbD, PsbE, PsbF, PsbH, PsbI, PsbJ, PsbK, PsbL, PsbM, PsbT, PsbX, PsbY, PsbZ, Psb30/Ycf12, peripheral proteins PsbO, CyanoQ (PsbQ), PsbU, PsbV and a large number of cofactors. It forms dimeric complexes. It depends on The D1/D2 heterodimer binds P680, chlorophylls that are the primary electron donor of PSII, and subsequent electron acceptors. It shares a non-heme iron and each subunit binds pheophytin, quinone, additional chlorophylls, carotenoids and lipids. D1 provides most of the ligands for the Mn4-Ca-O5 cluster of the oxygen-evolving complex (OEC). There is also a Cl(-1) ion associated with D1 and D2, which is required for oxygen evolution. The PSII complex binds additional chlorophylls, carotenoids and specific lipids. as a cofactor. In terms of processing, tyr-161 forms a radical intermediate that is referred to as redox-active TyrZ, YZ or Y-Z. C-terminally processed by CtpA; processing is essential to allow assembly of the oxygen-evolving complex and thus photosynthetic growth.

It is found in the cellular thylakoid membrane. It catalyses the reaction 2 a plastoquinone + 4 hnu + 2 H2O = 2 a plastoquinol + O2. Photosystem II (PSII) is a light-driven water:plastoquinone oxidoreductase that uses light energy to abstract electrons from H(2)O, generating O(2) and a proton gradient subsequently used for ATP formation. It consists of a core antenna complex that captures photons, and an electron transfer chain that converts photonic excitation into a charge separation. The D1/D2 (PsbA/PsbD) reaction center heterodimer binds P680, the primary electron donor of PSII as well as several subsequent electron acceptors. This Acaryochloris marina (strain MBIC 11017) protein is Photosystem II protein D1 2.